We begin with the raw amino-acid sequence, 356 residues long: uncharacterized protein (356 aa).

A disordered region spans residues 25–72 (EENNQENNKKFIEEFYPDKESDKNFSDDDSDDSDDSDDSENSDEEFDN). The segment covering 31–50 (NNKKFIEEFYPDKESDKNFS) has biased composition (basic and acidic residues). The span at 51-70 (DDDSDDSDDSDDSENSDEEF) shows a compositional bias: acidic residues. Positions 328-356 (EDTLNHSHSNKIKELENKITELKYQNEIN) form a coiled coil.

This sequence belongs to the mimivirus L17/R827 family.

This is an uncharacterized protein from Acanthamoeba polyphaga mimivirus (APMV).